The following is a 417-amino-acid chain: NADH-quinone oxidoreductase subunit D (417 aa).

This sequence belongs to the complex I 49 kDa subunit family. In terms of assembly, NDH-1 is composed of 14 different subunits. Subunits NuoB, C, D, E, F, and G constitute the peripheral sector of the complex.

Its subcellular location is the cell inner membrane. The enzyme catalyses a quinone + NADH + 5 H(+)(in) = a quinol + NAD(+) + 4 H(+)(out). In terms of biological role, NDH-1 shuttles electrons from NADH, via FMN and iron-sulfur (Fe-S) centers, to quinones in the respiratory chain. The immediate electron acceptor for the enzyme in this species is believed to be ubiquinone. Couples the redox reaction to proton translocation (for every two electrons transferred, four hydrogen ions are translocated across the cytoplasmic membrane), and thus conserves the redox energy in a proton gradient. The polypeptide is NADH-quinone oxidoreductase subunit D (Nitrosomonas europaea (strain ATCC 19718 / CIP 103999 / KCTC 2705 / NBRC 14298)).